A 482-amino-acid chain; its full sequence is G2/mitotic-specific cyclin cdc13 (482 aa).

3 stretches are compositionally biased toward polar residues: residues 35–55 (LHSS…STNV), 78–92 (SKNT…SVST), and 118–140 (SVFN…SVST). Residues 35 to 140 (LHSSENSLVN…LSTKSHSVST (106 aa)) are disordered. The Cyclin N-terminal domain occupies 206-332 (DIFEYLNELE…ILRVLEFNLA (127 aa)).

It belongs to the cyclin family. Cyclin AB subfamily. Interacts with cdc2. Interacts with rum1. Associates with microtubules. Also interacts with cdc11.

The protein resides in the nucleus. Its subcellular location is the cytoplasm. It localises to the cytoskeleton. It is found in the microtubule organizing center. The protein localises to the spindle pole body. Functionally, essential for the control of the cell cycle at the G2/M (mitosis) transition. Interacts with the cdc2 protein kinase to form MPF. G2/M cyclins accumulate steadily during G2 and are abruptly destroyed at mitosis. Involved in the reorganization of the cytoskeleton on transition from G2 to mitosis. Association with rum1 promotes its proteolysis during G1. Also essential for initiation of meiosis II. The polypeptide is G2/mitotic-specific cyclin cdc13 (Schizosaccharomyces pombe (strain 972 / ATCC 24843) (Fission yeast)).